The sequence spans 297 residues: Transcriptional regulator protein Pur-beta (297 aa).

Disordered stretches follow at residues M1–T26 and Q275–D297. N-acetylalanine is present on A2. A DNA-binding region spans residues E23–Y246. Basic and acidic residues predominate over residues Q275–E288.

This sequence belongs to the PUR DNA-binding protein family.

The protein localises to the nucleus. Functionally, transcriptional regulator which can act as an activator or a repressor. In Danio rerio (Zebrafish), this protein is Transcriptional regulator protein Pur-beta (purb).